We begin with the raw amino-acid sequence, 757 residues long: Alcohol dehydrogenase (quinone), dehydrogenase subunit (757 aa).

A signal peptide spans 1–34 (MTSGLLTPIKVTKKRLLSCAAALAFSAAVPVAFA). Position 35 is a pyrrolidone carboxylic acid (Q35). E95 contributes to the pyrroloquinoline quinone binding site. A disulfide bridge connects residues C141 and C142. R147 lines the pyrroloquinoline quinone pocket. Position 215 (E215) interacts with Ca(2+). Residue T277 participates in pyrroloquinoline quinone binding. Residues N297 and D342 each coordinate Ca(2+). D342 acts as the Proton acceptor in catalysis. Residues K369 and I588 each contribute to the pyrroloquinoline quinone site. A Cytochrome c domain is found at 640 to 719 (ARQKDGYFMY…DIRNFIVKRA (80 aa)). C653, C656, H657, and M696 together coordinate heme c. The disordered stretch occupies residues 726 to 757 (EVKARENSTGVPNDQFLNVPQSTADVPTADHP). Polar residues predominate over residues 732–750 (NSTGVPNDQFLNVPQSTAD).

It belongs to the bacterial PQQ dehydrogenase family. The alcohol dehydrogenase multicomponent enzyme system is composed of a dehydrogenase subunit I (AdhA), a cytochrome c subunit II (AdhB) and a subunit III (AdhS). Pyrroloquinoline quinone serves as cofactor. The cofactor is Ca(2+). Heme c is required as a cofactor.

The protein localises to the cell membrane. The catalysed reaction is ethanol + a ubiquinone = a ubiquinol + acetaldehyde. Its activity is regulated as follows. 2,6-dichloro-4-dicyanovinylphenol (PC16) and antimycin A inhibit ubiquinol oxidation activity more selectively than the ubiquinone reductase activity. In terms of biological role, dehydrogenase component of the alcohol dehydrogenase multicomponent enzyme system which is involved in the production of acetic acid and in the ethanol oxidase respiratory chain. Quinohemoprotein alcohol dehydrogenase (ADH) catalyzes the oxidation of ethanol to acetaldehyde by transferring electrons to the ubiquinone embedded in the membrane phospholipids. The electrons transfer from ethanol to membranous ubiquinone occurs from pyrroloquinoline quinone (PQQ) to one heme c in subunit I (AdhA), and finally to two heme c in subunit II (AdhB). Besides ubiquinone reduction, ADH also has a ubiquinol (QH2) oxidation reaction which mediates electron transfer from ubiquinol to the non-energy generating bypass oxidase system. The electrons transfer occurs from ubiquinol (QH2) to the additional heme c within subunit II (AdhB). Also able to use quinone analogs such as 2,3-dimethoxy-5-methyl-6-n-decyl-1,4-benzoquinone (DB) and 2,3-dimethoxy-5-methyl-6-n-pentyl-1,4-benzoquinone (PB). The sequence is that of Alcohol dehydrogenase (quinone), dehydrogenase subunit from Gluconobacter oxydans (strain 621H) (Gluconobacter suboxydans).